A 274-amino-acid chain; its full sequence is 4-hydroxy-3-methylbut-2-enyl diphosphate reductase (274 aa).

Residue Cys-12 participates in [4Fe-4S] cluster binding. His-36 and His-70 together coordinate (2E)-4-hydroxy-3-methylbut-2-enyl diphosphate. Positions 36 and 70 each coordinate dimethylallyl diphosphate. Positions 36 and 70 each coordinate isopentenyl diphosphate. Cys-92 provides a ligand contact to [4Fe-4S] cluster. His-120 serves as a coordination point for (2E)-4-hydroxy-3-methylbut-2-enyl diphosphate. Residue His-120 participates in dimethylallyl diphosphate binding. Residue His-120 participates in isopentenyl diphosphate binding. Glu-122 serves as the catalytic Proton donor. Thr-158 provides a ligand contact to (2E)-4-hydroxy-3-methylbut-2-enyl diphosphate. Cys-186 serves as a coordination point for [4Fe-4S] cluster. Ser-214, Ser-215, Asn-216, and Ser-258 together coordinate (2E)-4-hydroxy-3-methylbut-2-enyl diphosphate. Dimethylallyl diphosphate-binding residues include Ser-214, Ser-215, Asn-216, and Ser-258. 4 residues coordinate isopentenyl diphosphate: Ser-214, Ser-215, Asn-216, and Ser-258.

This sequence belongs to the IspH family. The cofactor is [4Fe-4S] cluster.

It carries out the reaction isopentenyl diphosphate + 2 oxidized [2Fe-2S]-[ferredoxin] + H2O = (2E)-4-hydroxy-3-methylbut-2-enyl diphosphate + 2 reduced [2Fe-2S]-[ferredoxin] + 2 H(+). The catalysed reaction is dimethylallyl diphosphate + 2 oxidized [2Fe-2S]-[ferredoxin] + H2O = (2E)-4-hydroxy-3-methylbut-2-enyl diphosphate + 2 reduced [2Fe-2S]-[ferredoxin] + 2 H(+). It participates in isoprenoid biosynthesis; dimethylallyl diphosphate biosynthesis; dimethylallyl diphosphate from (2E)-4-hydroxy-3-methylbutenyl diphosphate: step 1/1. The protein operates within isoprenoid biosynthesis; isopentenyl diphosphate biosynthesis via DXP pathway; isopentenyl diphosphate from 1-deoxy-D-xylulose 5-phosphate: step 6/6. Its function is as follows. Catalyzes the conversion of 1-hydroxy-2-methyl-2-(E)-butenyl 4-diphosphate (HMBPP) into a mixture of isopentenyl diphosphate (IPP) and dimethylallyl diphosphate (DMAPP). Acts in the terminal step of the DOXP/MEP pathway for isoprenoid precursor biosynthesis. The protein is 4-hydroxy-3-methylbut-2-enyl diphosphate reductase of Helicobacter pylori (strain P12).